The sequence spans 204 residues: Large ribosomal subunit protein bL25 (204 aa).

The protein belongs to the bacterial ribosomal protein bL25 family. CTC subfamily. In terms of assembly, part of the 50S ribosomal subunit; part of the 5S rRNA/L5/L18/L25 subcomplex. Contacts the 5S rRNA. Binds to the 5S rRNA independently of L5 and L18.

Functionally, this is one of the proteins that binds to the 5S RNA in the ribosome where it forms part of the central protuberance. In Pseudoalteromonas translucida (strain TAC 125), this protein is Large ribosomal subunit protein bL25.